Here is a 342-residue protein sequence, read N- to C-terminus: Tetraacyldisaccharide 4'-kinase (342 aa).

68–75 (TVGGTGKT) is a binding site for ATP.

Belongs to the LpxK family.

The enzyme catalyses a lipid A disaccharide + ATP = a lipid IVA + ADP + H(+). It participates in glycolipid biosynthesis; lipid IV(A) biosynthesis; lipid IV(A) from (3R)-3-hydroxytetradecanoyl-[acyl-carrier-protein] and UDP-N-acetyl-alpha-D-glucosamine: step 6/6. In terms of biological role, transfers the gamma-phosphate of ATP to the 4'-position of a tetraacyldisaccharide 1-phosphate intermediate (termed DS-1-P) to form tetraacyldisaccharide 1,4'-bis-phosphate (lipid IVA). The protein is Tetraacyldisaccharide 4'-kinase of Burkholderia lata (strain ATCC 17760 / DSM 23089 / LMG 22485 / NCIMB 9086 / R18194 / 383).